Consider the following 103-residue polypeptide: Matrix Gla protein (103 aa).

The first 19 residues, 1–19 (MKSLLLLSVLAALAVAALC), serve as a signal peptide directing secretion. Residue E21 is modified to 4-carboxyglutamate. Residues S22, S25, and S28 each carry the phosphoserine modification. One can recognise a Gla domain in the interval 51–97 (RAKAQERIRELNKPPYELNREACDDYKLCERYAMVYGYNAAYNRYFR). A 4-carboxyglutamate mark is found at E56, E60, E67, and E71. A disulfide bond links C73 and C79.

The protein belongs to the osteocalcin/matrix Gla protein family. Post-translationally, requires vitamin K-dependent gamma-carboxylation for its function.

The protein resides in the secreted. In terms of biological role, associates with the organic matrix of bone and cartilage. Thought to act as an inhibitor of bone formation. The sequence is that of Matrix Gla protein (MGP) from Sus scrofa (Pig).